A 290-amino-acid polypeptide reads, in one-letter code: Small ribosomal subunit biogenesis GTPase RsgA (290 aa).

One can recognise a CP-type G domain in the interval 61-218 (KSELVRPTVA…IVDTPGFSTL (158 aa)). GTP is bound by residues 110–113 (NKID) and 161–169 (GPSGAGKST). Zn(2+)-binding residues include C243, C248, H250, and C256.

It belongs to the TRAFAC class YlqF/YawG GTPase family. RsgA subfamily. As to quaternary structure, monomer. Associates with 30S ribosomal subunit, binds 16S rRNA. Requires Zn(2+) as cofactor.

It is found in the cytoplasm. Its function is as follows. One of several proteins that assist in the late maturation steps of the functional core of the 30S ribosomal subunit. Helps release RbfA from mature subunits. May play a role in the assembly of ribosomal proteins into the subunit. Circularly permuted GTPase that catalyzes slow GTP hydrolysis, GTPase activity is stimulated by the 30S ribosomal subunit. This Clostridium beijerinckii (strain ATCC 51743 / NCIMB 8052) (Clostridium acetobutylicum) protein is Small ribosomal subunit biogenesis GTPase RsgA.